The following is a 207-amino-acid chain: Large ribosomal subunit protein uL4 (207 aa).

The disordered stretch occupies residues 52–76; the sequence is KNTSLVSGGGKKPWKQKGTGRARQG.

The protein belongs to the universal ribosomal protein uL4 family. In terms of assembly, part of the 50S ribosomal subunit.

Its function is as follows. One of the primary rRNA binding proteins, this protein initially binds near the 5'-end of the 23S rRNA. It is important during the early stages of 50S assembly. It makes multiple contacts with different domains of the 23S rRNA in the assembled 50S subunit and ribosome. Functionally, forms part of the polypeptide exit tunnel. The sequence is that of Large ribosomal subunit protein uL4 from Myxococcus xanthus (strain DK1622).